We begin with the raw amino-acid sequence, 206 residues long: Probable GTP-binding protein EngB (206 aa).

Residues Asp-23 to Glu-195 enclose the EngB-type G domain. GTP is bound by residues Gly-31–Ser-38, Gly-58–Leu-62, Asp-76–Gly-79, Thr-143–Asp-146, and Phe-174–Ala-176. Mg(2+) contacts are provided by Ser-38 and Thr-60.

This sequence belongs to the TRAFAC class TrmE-Era-EngA-EngB-Septin-like GTPase superfamily. EngB GTPase family. Mg(2+) is required as a cofactor.

Necessary for normal cell division and for the maintenance of normal septation. The chain is Probable GTP-binding protein EngB from Geobacter sulfurreducens (strain ATCC 51573 / DSM 12127 / PCA).